The following is a 71-amino-acid chain: Phosphatidylinositol N-acetylglucosaminyltransferase subunit Y (71 aa).

A topological domain (cytoplasmic) is located at residue methionine 1. Residues 2–21 (FFSLPVLTVLIPLVSLTGLL) form a helical membrane-spanning segment. The Lumenal segment spans residues 22 to 44 (YSASVEEDFPNGCTSTASLCFYS). Residues 45 to 65 (LLLPITLPVYVFFHLWTWMGL) traverse the membrane as a helical segment. The Cytoplasmic portion of the chain corresponds to 66–71 (KLFRHN).

Component of the glycosylphosphatidylinositol-N-acetylglucosaminyltransferase (GPI-GnT) complex composed at least by PIGA, PIGC, PIGH, PIGP, PIGQ, PIGY and DPM2.

It localises to the endoplasmic reticulum membrane. It participates in glycolipid biosynthesis; glycosylphosphatidylinositol-anchor biosynthesis. Part of the glycosylphosphatidylinositol-N-acetylglucosaminyltransferase (GPI-GnT) complex that catalyzes the transfer of N-acetylglucosamine from UDP-N-acetylglucosamine to phosphatidylinositol and participates in the first step of GPI biosynthesis. May act by regulating the catalytic subunit PIGA. This Xenopus tropicalis (Western clawed frog) protein is Phosphatidylinositol N-acetylglucosaminyltransferase subunit Y.